The sequence spans 355 residues: Uroporphyrinogen decarboxylase (355 aa).

Substrate is bound by residues Arg38–Arg42, Asp87, Tyr162, Ser217, and His331.

The protein belongs to the uroporphyrinogen decarboxylase family. In terms of assembly, homodimer.

Its subcellular location is the cytoplasm. The enzyme catalyses uroporphyrinogen III + 4 H(+) = coproporphyrinogen III + 4 CO2. Its pathway is porphyrin-containing compound metabolism; protoporphyrin-IX biosynthesis; coproporphyrinogen-III from 5-aminolevulinate: step 4/4. Functionally, catalyzes the decarboxylation of four acetate groups of uroporphyrinogen-III to yield coproporphyrinogen-III. This is Uroporphyrinogen decarboxylase from Streptomyces avermitilis (strain ATCC 31267 / DSM 46492 / JCM 5070 / NBRC 14893 / NCIMB 12804 / NRRL 8165 / MA-4680).